The primary structure comprises 482 residues: UDP-N-acetylmuramate--L-alanine ligase (482 aa).

123-129 (GTHGKTT) provides a ligand contact to ATP.

It belongs to the MurCDEF family.

It is found in the cytoplasm. The catalysed reaction is UDP-N-acetyl-alpha-D-muramate + L-alanine + ATP = UDP-N-acetyl-alpha-D-muramoyl-L-alanine + ADP + phosphate + H(+). It functions in the pathway cell wall biogenesis; peptidoglycan biosynthesis. Cell wall formation. The chain is UDP-N-acetylmuramate--L-alanine ligase from Pseudomonas putida (strain W619).